The primary structure comprises 100 residues: NADH-quinone oxidoreductase subunit K (100 aa).

A run of 3 helical transmembrane segments spans residues 4–24 (LSHG…GMII), 28–48 (LLFM…AFVV), and 60–80 (VMYI…LALL).

The protein belongs to the complex I subunit 4L family. As to quaternary structure, NDH-1 is composed of 13 different subunits. Subunits NuoA, H, J, K, L, M, N constitute the membrane sector of the complex.

Its subcellular location is the cell inner membrane. It catalyses the reaction a quinone + NADH + 5 H(+)(in) = a quinol + NAD(+) + 4 H(+)(out). Functionally, NDH-1 shuttles electrons from NADH, via FMN and iron-sulfur (Fe-S) centers, to quinones in the respiratory chain. The immediate electron acceptor for the enzyme in this species is believed to be ubiquinone. Couples the redox reaction to proton translocation (for every two electrons transferred, four hydrogen ions are translocated across the cytoplasmic membrane), and thus conserves the redox energy in a proton gradient. The protein is NADH-quinone oxidoreductase subunit K of Sodalis glossinidius (strain morsitans).